Reading from the N-terminus, the 264-residue chain is Agamous-like MADS-box protein AGL61 (264 aa).

The MADS-box domain occupies 62–122 (IGRQKIPMVK…KKPFSFGHPS (61 aa)).

As to quaternary structure, interacts with PHE1/AGL37, PHE2/AGL38, AGL80 and AGL86. Forms a heterodimer with AGL80. As to expression, expressed exclusively in the central cell of the female gametophyte and in early endosperm.

It is found in the nucleus. Probable transcription factor. Controls central cell differentiation during female gametophyte development. In Arabidopsis thaliana (Mouse-ear cress), this protein is Agamous-like MADS-box protein AGL61 (AGL61).